The following is a 487-amino-acid chain: GPI mannosyltransferase 1 (487 aa).

The next 3 helical transmembrane spans lie at 26-46 (PLPLYVSAFLLRIVLLLYGLW), 87-107 (ILAWLLLPTTWTAGAQWGPWA), and 121-141 (VLFAAADLVAGWLIEQVLVMG). The tract at residues 147–175 (SAAKGKEKDTEKTKEGGKKGPSVTASTGM) is disordered. A compositionally biased stretch (basic and acidic residues) spans 150–164 (KGKEKDTEKTKEGGK). Transmembrane regions (helical) follow at residues 205 to 225 (LLGVLVMALLWAVLSRRITLA), 227 to 247 (LLLGFSVHFKIYPFIYAPAIV), 289 to 309 (LLLAFTSLATFLSLNFLMYRL), 359 to 379 (IESLAFLPQLVLSTILIPLTL), 393 to 413 (FAFVTFNKVCTSQYFLWYLVL), 429 to 449 (MGLVALGLWVLGQALWLQQAY), and 462 to 482 (GLWMASLGFFVVNCWILGVIV).

The protein belongs to the PIGM family.

The protein resides in the endoplasmic reticulum membrane. It functions in the pathway glycolipid biosynthesis; glycosylphosphatidylinositol-anchor biosynthesis. Functionally, mannosyltransferase involved in glycosylphosphatidylinositol-anchor biosynthesis. Transfers the first alpha-1,4-mannose to GlcN-acyl-PI during GPI precursor assembly. Required for cell wall integrity. This Neurospora crassa (strain ATCC 24698 / 74-OR23-1A / CBS 708.71 / DSM 1257 / FGSC 987) protein is GPI mannosyltransferase 1 (gim-1).